Consider the following 231-residue polypeptide: Demethylmenaquinone methyltransferase (231 aa).

S-adenosyl-L-methionine-binding positions include threonine 62, aspartate 80, 102-103 (DA), and serine 119.

The protein belongs to the class I-like SAM-binding methyltransferase superfamily. MenG/UbiE family.

The enzyme catalyses a 2-demethylmenaquinol + S-adenosyl-L-methionine = a menaquinol + S-adenosyl-L-homocysteine + H(+). The protein operates within quinol/quinone metabolism; menaquinone biosynthesis; menaquinol from 1,4-dihydroxy-2-naphthoate: step 2/2. In terms of biological role, methyltransferase required for the conversion of demethylmenaquinol (DMKH2) to menaquinol (MKH2). The polypeptide is Demethylmenaquinone methyltransferase (Streptomyces avermitilis (strain ATCC 31267 / DSM 46492 / JCM 5070 / NBRC 14893 / NCIMB 12804 / NRRL 8165 / MA-4680)).